Here is a 142-residue protein sequence, read N- to C-terminus: Large ribosomal subunit protein uL16 (142 aa).

Belongs to the universal ribosomal protein uL16 family. In terms of assembly, part of the 50S ribosomal subunit.

Binds 23S rRNA and is also seen to make contacts with the A and possibly P site tRNAs. The polypeptide is Large ribosomal subunit protein uL16 (Aquifex aeolicus (strain VF5)).